The chain runs to 102 residues: Transcription factor UPBEAT1 (102 aa).

The bHLH domain occupies 32 to 82 (IRPRKSVEASRRPCRAIHRRVKTLKELVPNTKTSEGLDGLFRQTADYILAL).

Homodimer. As to expression, expressed in the root vascular tissue and in root hairs and lateral root caps. Detected at the protein level in all cell files in the elongation zone.

Its subcellular location is the nucleus. Transcription factor that modulates the balance between cellular proliferation and differentiation in root growth. Does not act through cytokinin and auxin signaling, but by repressing peroxidase expression in the elongation zone. In Arabidopsis thaliana (Mouse-ear cress), this protein is Transcription factor UPBEAT1 (UPB1).